We begin with the raw amino-acid sequence, 795 residues long: Myosin light chain kinase 3 (795 aa).

At serine 155 the chain carries Phosphoserine. Disordered stretches follow at residues 236 to 257 (GPGQVPLPTEAESRLPETASEN) and 305 to 328 (SSGPLPQPLGPLTPDSDIHSGDAL). 2 positions are modified to phosphoserine: serine 351 and serine 432. Residues 367 to 452 (DQIPKGARPF…GPGRTEAGRL (86 aa)) are disordered. The 256-residue stretch at 491–746 (VSQHEVLGGG…ATQCLKHEWL (256 aa)) folds into the Protein kinase domain. Residues 497–505 (LGGGRFGQV) and lysine 520 contribute to the ATP site. The active-site Proton acceptor is the aspartate 612.

It belongs to the protein kinase superfamily. CAMK Ser/Thr protein kinase family. Mg(2+) serves as cofactor. Phosphorylated on serine residues. In terms of tissue distribution, restricted to cardiomyocytes (at protein level). Down-regulated in heart after experimental myocardial infarction at the protein level; no significant changes at the mRNA level.

The protein resides in the cytoplasm. The catalysed reaction is L-seryl-[myosin light chain] + ATP = O-phospho-L-seryl-[myosin light chain] + ADP + H(+). It carries out the reaction L-threonyl-[myosin light chain] + ATP = O-phospho-L-threonyl-[myosin light chain] + ADP + H(+). Functionally, kinase that phosphorylates MYL2 in vitro. Has been proposed to be calmodulin-dependent, although MYL2 phosphorylation has also been observed in the presence or absence of calmodulin. Promotes sarcomere formation in cardiomyocytes and increases cardiomyocyte contractility. The polypeptide is Myosin light chain kinase 3 (Mylk3) (Mus musculus (Mouse)).